The sequence spans 200 residues: 3-isopropylmalate dehydratase small subunit (200 aa).

This sequence belongs to the LeuD family. LeuD type 1 subfamily. As to quaternary structure, heterodimer of LeuC and LeuD.

It catalyses the reaction (2R,3S)-3-isopropylmalate = (2S)-2-isopropylmalate. Its pathway is amino-acid biosynthesis; L-leucine biosynthesis; L-leucine from 3-methyl-2-oxobutanoate: step 2/4. In terms of biological role, catalyzes the isomerization between 2-isopropylmalate and 3-isopropylmalate, via the formation of 2-isopropylmaleate. This chain is 3-isopropylmalate dehydratase small subunit, found in Methylobacterium radiotolerans (strain ATCC 27329 / DSM 1819 / JCM 2831 / NBRC 15690 / NCIMB 10815 / 0-1).